A 193-amino-acid polypeptide reads, in one-letter code: Transmembrane protein 276 (193 aa).

The N-terminal stretch at 1-32 is a signal peptide; sequence MTPRPGGEWSSALSHLALGAVSLHAALSTAQA. The next 4 helical transmembrane spans lie at 35 to 55, 63 to 83, 89 to 109, and 114 to 134; these read GAAAGFLLQALATATMLASGL, AGAWVATVIGLPLLAFDFHWV, SANLLLGGGMVLAVAGDHLGA, and VAGQAVVLVVAVTILIVAVFT.

It localises to the membrane. The sequence is that of Transmembrane protein 276 from Bos taurus (Bovine).